A 391-amino-acid polypeptide reads, in one-letter code: MANWTQEDGAPTPVTNPSEVSQVSGGSVTGGPAVTSCLIPSFAEAVKLLKARYSCLVLDTHRRHISLPPVHLKKKKTGIQEQLNAELLKYSNSLDGVPVAYDNIKVVGQHGNIYDDQGFIHFNIEASFVIFRPKNGSRLMGVINKMGASHVGCLVHGCFNASVMKPNALTSDQWRDSGLCVGQSLEFEVFQLDADAAGVLLIRGRLDRSRVQELVAQFEQKQVTAESSTEADATEDTTDSPKPKKKKKRKKDKNDTESSMEECVNNSSLQETSEHHQTTTEEDCSANGRHKEKKKKKKRDKNDTESSMDECMNNNSLQETALDTTEEDCNANERHKEKKKKKKRDKQQDSAEIVPTSDSSGYISDKTSRKRALEAGDDTETPAAKKKKKSK.

Disordered stretches follow at residues 1–27 (MANW…SGGS) and 220–391 (QKQV…KKSK). The segment covering 288 to 299 (GRHKEKKKKKKR) has biased composition (basic residues). The stretch at 289–353 (RHKEKKKKKK…RDKQQDSAEI (65 aa)) forms a coiled coil. Residues 312-323 (MNNNSLQETALD) are compositionally biased toward polar residues. Basic residues predominate over residues 336–345 (KEKKKKKKRD).

This sequence belongs to the eukaryotic RPA43 RNA polymerase subunit family. In terms of assembly, component of the RNA polymerase I (Pol I) complex consisting of at least 13 subunits.

It localises to the nucleus. The protein resides in the nucleolus. Its function is as follows. DNA-dependent RNA polymerase catalyzes the transcription of DNA into RNA using the four ribonucleoside triphosphates as substrates. Component of RNA polymerase I which synthesizes ribosomal RNA precursors. May be involved in recruitment of Pol I to rDNA promoters. This Danio rerio (Zebrafish) protein is DNA-directed RNA polymerase I subunit RPA43.